A 156-amino-acid chain; its full sequence is ATP synthase subunit b (156 aa).

The helical transmembrane segment at 7 to 27 (LIGQLIAFALFVAFCMKFVWP) threads the bilayer.

Belongs to the ATPase B chain family. F-type ATPases have 2 components, F(1) - the catalytic core - and F(0) - the membrane proton channel. F(1) has five subunits: alpha(3), beta(3), gamma(1), delta(1), epsilon(1). F(0) has three main subunits: a(1), b(2) and c(10-14). The alpha and beta chains form an alternating ring which encloses part of the gamma chain. F(1) is attached to F(0) by a central stalk formed by the gamma and epsilon chains, while a peripheral stalk is formed by the delta and b chains.

The protein localises to the cell inner membrane. Its function is as follows. F(1)F(0) ATP synthase produces ATP from ADP in the presence of a proton or sodium gradient. F-type ATPases consist of two structural domains, F(1) containing the extramembraneous catalytic core and F(0) containing the membrane proton channel, linked together by a central stalk and a peripheral stalk. During catalysis, ATP synthesis in the catalytic domain of F(1) is coupled via a rotary mechanism of the central stalk subunits to proton translocation. In terms of biological role, component of the F(0) channel, it forms part of the peripheral stalk, linking F(1) to F(0). This Actinobacillus pleuropneumoniae serotype 7 (strain AP76) protein is ATP synthase subunit b.